The chain runs to 331 residues: Olfactory receptor 7E178 (331 aa).

Residues 1-47 (MMDRYSFIMHQHRDDTVWCPSKIEEQNITRISEFHLMGLSDDLQLQP) are Extracellular-facing. N27 carries an N-linked (GlcNAc...) asparagine glycan. The chain crosses the membrane as a helical span at residues 48–68 (ILFGLFLSMYLVTLLGNLLII). The Cytoplasmic portion of the chain corresponds to 69–80 (LTVSSDSHLHSP). A helical membrane pass occupies residues 81-100 (MYFFLSNLSLADVSFTSTTL). The Extracellular portion of the chain corresponds to 101–119 (PKMIVDIQTHNRAISYSGC). A disulfide bridge connects residues C119 and C201. The helical transmembrane segment at 120–140 (LTQMSFFMLFGCLDSLLLTAM) threads the bilayer. Over 141–164 (AYDRFVAICHPLHYQFIMNPRLCG) the chain is Cytoplasmic. A helical transmembrane segment spans residues 165-185 (LLVFLSVLISLFVSQLHNSVV). The Extracellular portion of the chain corresponds to 186-218 (LQLTYFKSVDISHFFCDPSQLLNLACSDTFTNN). The helical transmembrane segment at 219 to 239 (IVMYFVGAISGFLPISGIFFS) threads the bilayer. Residues 240–266 (YYKIVSSILRMPSPGGKYKAFSTCGSH) are Cytoplasmic-facing. A helical membrane pass occupies residues 267-287 (LSVVCLFYGTGLGVYLSSAVS). Over 288–293 (LSPRKG) the chain is Extracellular. A helical transmembrane segment spans residues 294–314 (AVASIVYTVVTPMLNPFIYSL). Residues 315 to 331 (RNQDIKRAMWRLLRKTV) lie on the Cytoplasmic side of the membrane.

Belongs to the G-protein coupled receptor 1 family.

The protein localises to the cell membrane. Odorant receptor. The sequence is that of Olfactory receptor 7E178 from Mus musculus (Mouse).